Reading from the N-terminus, the 198-residue chain is Probable molybdenum cofactor guanylyltransferase (198 aa).

Residues 11–13 (LAG), K23, D71, and D102 contribute to the GTP site. Residue D102 participates in Mg(2+) binding.

Belongs to the MobA family. Mg(2+) serves as cofactor.

It is found in the cytoplasm. It carries out the reaction Mo-molybdopterin + GTP + H(+) = Mo-molybdopterin guanine dinucleotide + diphosphate. In terms of biological role, transfers a GMP moiety from GTP to Mo-molybdopterin (Mo-MPT) cofactor (Moco or molybdenum cofactor) to form Mo-molybdopterin guanine dinucleotide (Mo-MGD) cofactor. The chain is Probable molybdenum cofactor guanylyltransferase from Halalkalibacterium halodurans (strain ATCC BAA-125 / DSM 18197 / FERM 7344 / JCM 9153 / C-125) (Bacillus halodurans).